We begin with the raw amino-acid sequence, 305 residues long: Glutaminase (305 aa).

Substrate-binding residues include Ser61, Asn113, Glu158, Asn165, Tyr189, Tyr241, and Val259.

This sequence belongs to the glutaminase family. In terms of assembly, homotetramer.

The enzyme catalyses L-glutamine + H2O = L-glutamate + NH4(+). This Clostridium botulinum (strain Loch Maree / Type A3) protein is Glutaminase.